The chain runs to 2181 residues: Non-reducing polyketide synthase dpmaA (2181 aa).

The segment at 74-180 is N-terminal acylcarrier protein transacylase domain (SAT); the sequence is QWVKGNSTQP…LALCCGAYID (107 aa). A Ketosynthase family 3 (KS3) domain is found at 347–779; it reads QAQLLVLGPV…GTNAAMLVCQ (433 aa). Residues Cys525, His661, and His702 each act as for beta-ketoacyl synthase activity in the active site. Positions 891-1193 are malonyl-CoA:ACP transacylase (MAT) domain; sequence VLAGQTGRRV…SFYPAALGEP (303 aa). The active-site For acyl/malonyl transferase activity is Ser977. The tract at residues 1269-1401 is N-terminal hotdog fold; that stretch reads VSLIGKTQNA…GVITLQEVYS (133 aa). Positions 1269 to 1579 constitute a PKS/mFAS DH domain; that stretch reads VSLIGKTQNA…FQKIAISSLK (311 aa). Residues 1276–1573 form a product template (PT) domain region; the sequence is QNAGVQTVEY…TILGAKFQKI (298 aa). The segment at 1425–1579 is C-terminal hotdog fold; the sequence is SASVVQGDFI…FQKIAISSLK (155 aa). Residues 1587-1603 are compositionally biased toward polar residues; it reads GVPQTSGGRTPSSSITE. Disordered stretches follow at residues 1587–1618 and 1652–1675; these read GVPQ…PIPG and ISGS…AMET. A compositionally biased stretch (low complexity) spans 1653–1670; sequence SGSSRSTSSSPPSLESRS. A Carrier domain is found at 1677–1753; the sequence is EITEGAGSAL…TLFHTIFPQQ (77 aa). Ser1713 bears the O-(pantetheine 4'-phosphoryl)serine mark. The interval 1982 to 2164 is methyltransferase (CMeT) domain; sequence EFMNCLFSYN…QSGFDHIDWT (183 aa).

It participates in secondary metabolite biosynthesis; terpenoid biosynthesis. Its function is as follows. Non-reducing polyketide synthase; part of the gene cluster that mediates the biosynthesis of the diterpenoid pyrones subglutinols A and B. The first step of the pathway is the synthesis of the alpha-pyrone moiety by the polyketide synthase dpmaA via condensation of one acetyl-CoA starter unit with 3 malonyl-CoA units and 2 methylations. The alpha-pyrone is then combined with geranylgeranyl pyrophosphate (GGPP) formed by the GGPP synthase dpmaD through the action of the prenyltransferase dpmaC to yield a linear alpha-pyrone diterpenoid. Subsequent steps in the diterpenoid pyrone biosynthetic pathway involve the decalin core formation, which is initiated by the epoxidation of the C10-C11 olefin by the FAD-dependent oxidoreductase dpmaE, and is followed by a cyclization cascade catalyzed by the terpene cyclase dpmaB. The dehydrogenase dpmaF is then involved in tetrahydrofuran (THF) ring formation at the C5 unit to complete the formation of subglutinols A and B. The protein is Non-reducing polyketide synthase dpmaA of Metarhizium anisopliae (Entomophthora anisopliae).